Reading from the N-terminus, the 402-residue chain is Acyl-[acyl-carrier-protein] desaturase 3, chloroplastic (402 aa).

Residues 1–32 (MSLTGCLPPRPPCSMRRRTSGGGASVSPVVAM) constitute a chloroplast transit peptide. Positions 1–66 (MSLTGCLPPR…EVPPQVTHTL (66 aa)) are disordered. Fe cation contacts are provided by Glu-139, Glu-178, His-181, Glu-231, Glu-264, and His-267.

The protein belongs to the fatty acid desaturase type 2 family. Homodimer. Fe(2+) serves as cofactor.

Its subcellular location is the plastid. The protein resides in the chloroplast. Its pathway is lipid metabolism; fatty acid metabolism. Introduces a cis double bond in the acyl chain of an acyl-[acyl-carrier protein]. In Oryza sativa subsp. japonica (Rice), this protein is Acyl-[acyl-carrier-protein] desaturase 3, chloroplastic.